A 300-amino-acid polypeptide reads, in one-letter code: Ribonuclease HIII (300 aa).

Positions 86 to 300 (RPRLGVDESG…FNEICDSASA (215 aa)) constitute an RNase H type-2 domain. A divalent metal cation contacts are provided by Asp92, Glu93, and Asp196.

Belongs to the RNase HII family. RnhC subfamily. Requires Mn(2+) as cofactor. The cofactor is Mg(2+).

The protein localises to the cytoplasm. The enzyme catalyses Endonucleolytic cleavage to 5'-phosphomonoester.. Functionally, endonuclease that specifically degrades the RNA of RNA-DNA hybrids. The protein is Ribonuclease HIII of Chlamydia caviae (strain ATCC VR-813 / DSM 19441 / 03DC25 / GPIC) (Chlamydophila caviae).